Here is a 730-residue protein sequence, read N- to C-terminus: Elongation factor 2 (730 aa).

The tr-type G domain occupies 19–260 (DRIRNIGIVA…MVVKHLPNPL (242 aa)). GTP is bound by residues 28–35 (AHIDHGKT), 94–98 (DTPGH), and 148–151 (NKVD). Position 597 is a diphthamide (histidine 597).

It belongs to the TRAFAC class translation factor GTPase superfamily. Classic translation factor GTPase family. EF-G/EF-2 subfamily.

Its subcellular location is the cytoplasm. Catalyzes the GTP-dependent ribosomal translocation step during translation elongation. During this step, the ribosome changes from the pre-translocational (PRE) to the post-translocational (POST) state as the newly formed A-site-bound peptidyl-tRNA and P-site-bound deacylated tRNA move to the P and E sites, respectively. Catalyzes the coordinated movement of the two tRNA molecules, the mRNA and conformational changes in the ribosome. This Methanoculleus marisnigri (strain ATCC 35101 / DSM 1498 / JR1) protein is Elongation factor 2.